The chain runs to 382 residues: Cell division protein FtsZ (382 aa).

Residues Gly-21–Asn-25, Gly-108–Gly-110, Glu-139, Arg-143, and Asp-187 contribute to the GTP site. The interval Lys-320 to Gly-382 is disordered. Over residues Gln-326–Val-341 the composition is skewed to polar residues. The segment covering Pro-342–Pro-351 has biased composition (basic and acidic residues). Residues Gln-352–Ala-365 show a composition bias toward polar residues.

This sequence belongs to the FtsZ family. As to quaternary structure, homodimer. Polymerizes to form a dynamic ring structure in a strictly GTP-dependent manner. Interacts directly with several other division proteins. Interacts with FtsA. Interacts with Phi29 DNA replication protein 1. Interacts with the cell division inhibitor MciZ.

The protein localises to the cytoplasm. During sporulation, is negatively regulated by MciZ, which binds to FtsZ and inhibits its polymerization and the formation of the Z ring. Essential cell division protein that forms a contractile ring structure (Z ring) at the future cell division site. The regulation of the ring assembly controls the timing and the location of cell division. One of the functions of the FtsZ ring is to recruit other cell division proteins to the septum to produce a new cell wall between the dividing cells. Binds GTP and shows GTPase activity. This Bacillus subtilis (strain 168) protein is Cell division protein FtsZ.